A 213-amino-acid polypeptide reads, in one-letter code: Outer-membrane lipoprotein carrier protein (213 aa).

Residues 1-23 form the signal peptide; that stretch reads MKKLLKQSLLGFALVSMTGAAFA.

This sequence belongs to the LolA family. As to quaternary structure, monomer.

The protein resides in the periplasm. Functionally, participates in the translocation of lipoproteins from the inner membrane to the outer membrane. Only forms a complex with a lipoprotein if the residue after the N-terminal Cys is not an aspartate (The Asp acts as a targeting signal to indicate that the lipoprotein should stay in the inner membrane). The polypeptide is Outer-membrane lipoprotein carrier protein (Actinobacillus pleuropneumoniae serotype 3 (strain JL03)).